An 840-amino-acid chain; its full sequence is Phosphatidylglycerol lysyltransferase (840 aa).

The Cytoplasmic portion of the chain corresponds to 1-8; the sequence is MNQEVKNK. Residues 9-29 form a helical membrane-spanning segment; the sequence is IFSILKITFATALFIFVAITL. Residues 30-52 lie on the Extracellular side of the membrane; sequence YRELSGINFKDTLVEFSKINRMS. The helical transmembrane segment at 53-73 threads the bilayer; that stretch reads LVLLFIGGGASLVILSMYDVI. At 74–89 the chain is on the cytoplasmic side; it reads LSRALKMDISLGKVLR. The helical transmembrane segment at 90-110 threads the bilayer; it reads VSYIINALNAIVGFGGFIGAG. At 111-128 the chain is on the extracellular side; the sequence is VRAMVYKNYTHDKKKLVH. A helical transmembrane segment spans residues 129 to 149; the sequence is FISLILISMLTGLSLLSLLIV. The Cytoplasmic segment spans residues 150 to 161; sequence FHVFDASLILDK. Residues 162–182 traverse the membrane as a helical segment; it reads ITWVRWVLYVVSFFLPLFIIY. At 183–200 the chain is on the extracellular side; that stretch reads SMVRPPDKNNRFVGLYCT. The chain crosses the membrane as a helical span at residues 201 to 221; that stretch reads LVSCVEWLAAAVVLYFCGVIV. Topologically, residues 222–229 are cytoplasmic; it reads DAHVSFMS. Residues 230–250 traverse the membrane as a helical segment; the sequence is FIAIFIIAALSGLVSFIPGGF. At 251–271 the chain is on the extracellular side; that stretch reads GAFDLVVLLGFKTLGVPEEKV. Residues 272 to 292 traverse the membrane as a helical segment; it reads LLMLLLYRFAYYFVPVIIALI. Residues 293-337 lie on the Cytoplasmic side of the membrane; it reads LSSFEFGTSAKKYIEGSKYFIPAKDVTSFLMSYQKDIIAKIPSLS. Residues 338 to 358 traverse the membrane as a helical segment; the sequence is LAILVFFTSMIFFVNNLTIVY. Over 359 to 369 the chain is Extracellular; the sequence is DALYDGNHLTY. Residues 370–390 traverse the membrane as a helical segment; it reads YILLAIHTSACLLLLLNVVGI. Over 391 to 394 the chain is Cytoplasmic; that stretch reads YKQS. 2 helical membrane passes run 395-415 and 416-436; these read RRAI…TFFT and YASY…IVAF. The Cytoplasmic portion of the chain corresponds to 437 to 450; sequence RRARRLKRPVRMRN. The chain crosses the membrane as a helical span at residues 451–471; the sequence is IVAMLLFSLFILYVNHIFIAG. Residues 472–489 lie on the Extracellular side of the membrane; it reads TLYALDIYTIEMHTSVLR. The chain crosses the membrane as a helical span at residues 490-510; the sequence is YYFWLTILIIAIIIGMIAWLF. Over 511 to 840 the chain is Cytoplasmic; sequence DYQFSKVRIS…SKVMRVIRHK (330 aa).

Belongs to the LPG synthase family.

The protein localises to the cell membrane. The catalysed reaction is L-lysyl-tRNA(Lys) + a 1,2-diacyl-sn-glycero-3-phospho-(1'-sn-glycerol) = a 1,2-diacyl-sn-glycero-3-phospho-1'-(3'-O-L-lysyl)-sn-glycerol + tRNA(Lys). In terms of biological role, catalyzes the transfer of a lysyl group from L-lysyl-tRNA(Lys) to membrane-bound phosphatidylglycerol (PG), which produces lysylphosphatidylglycerol (LPG), a major component of the bacterial membrane with a positive net charge. LPG synthesis contributes to bacterial virulence as it is involved in the resistance mechanism against cationic antimicrobial peptides (CAMP) produces by the host's immune system (defensins, cathelicidins) and by the competing microorganisms (bacteriocins). In fact, the modification of anionic phosphatidylglycerol with positively charged L-lysine results in repulsion of the peptides. This is Phosphatidylglycerol lysyltransferase (mprF) from Staphylococcus aureus (strain COL).